The following is a 141-amino-acid chain: Large ribosomal subunit protein uL11 (141 aa).

It belongs to the universal ribosomal protein uL11 family. Part of the ribosomal stalk of the 50S ribosomal subunit. Interacts with L10 and the large rRNA to form the base of the stalk. L10 forms an elongated spine to which L12 dimers bind in a sequential fashion forming a multimeric L10(L12)X complex. Post-translationally, one or more lysine residues are methylated.

Functionally, forms part of the ribosomal stalk which helps the ribosome interact with GTP-bound translation factors. This Roseiflexus castenholzii (strain DSM 13941 / HLO8) protein is Large ribosomal subunit protein uL11.